A 352-amino-acid polypeptide reads, in one-letter code: Tropomodulin-3 (352 aa).

Position 25 is a phosphoserine (Ser-25).

The protein belongs to the tropomodulin family. Binds to the N-terminus of tropomyosin and to actin. Interacts with FLII. In terms of tissue distribution, ubiquitous.

Its subcellular location is the cytoplasm. The protein localises to the cytoskeleton. Blocks the elongation and depolymerization of the actin filaments at the pointed end. The Tmod/TM complex contributes to the formation of the short actin protofilament, which in turn defines the geometry of the membrane skeleton. The polypeptide is Tropomodulin-3 (TMOD3) (Homo sapiens (Human)).